A 525-amino-acid polypeptide reads, in one-letter code: GMP synthase [glutamine-hydrolyzing] (525 aa).

Residues 9-207 (RILILDFGSQ…VLDICQCEAL (199 aa)) enclose the Glutamine amidotransferase type-1 domain. The active-site Nucleophile is cysteine 86. Catalysis depends on residues histidine 181 and glutamate 183. One can recognise a GMPS ATP-PPase domain in the interval 208–400 (WTPAKIIDDA…LGLPYNMLYR (193 aa)). An ATP-binding site is contributed by 235-241 (SGGVDSS).

As to quaternary structure, homodimer.

The enzyme catalyses XMP + L-glutamine + ATP + H2O = GMP + L-glutamate + AMP + diphosphate + 2 H(+). Its pathway is purine metabolism; GMP biosynthesis; GMP from XMP (L-Gln route): step 1/1. Catalyzes the synthesis of GMP from XMP. In Pectobacterium atrosepticum (strain SCRI 1043 / ATCC BAA-672) (Erwinia carotovora subsp. atroseptica), this protein is GMP synthase [glutamine-hydrolyzing].